The chain runs to 500 residues: Probable malate:quinone oxidoreductase (500 aa).

Belongs to the MQO family. FAD is required as a cofactor.

The catalysed reaction is (S)-malate + a quinone = a quinol + oxaloacetate. It participates in carbohydrate metabolism; tricarboxylic acid cycle; oxaloacetate from (S)-malate (quinone route): step 1/1. The protein is Probable malate:quinone oxidoreductase of Bacillus cereus (strain AH187).